The sequence spans 372 residues: MAKAPAVGIDLGTTYSCVGVFQHGKVEIIANDQGNRTTPSYVAFTDTERLIGDAAKNKTASNPYRSLDAKRLIGRNFSDTNVKADMKHWPFTVIEEGGRPKIKIEFKGESKTFYAEEISSMVLLKMKETAEAYLGKESVTDAVVTVPAYFNDSQRQATKECGVISGMNILRIINEPTAAAIAYGLDKKGGAERNVLIFDLVGGTFDVSVLTIEEGIFEVKSTSRDTHLGGEDFDNRMVTHSSPEFKRKHKKDITPNKRAVRRLRTACERAKRTLSSSTQAKIEIDSLFEGIDYYTSVTRARFEELNSDLFRGTLEPVENALRDAKLDKEKIHEIVLVGGSTRIPKIQKLQDFFHGKELNKSINPDEAVAIVQ.

It belongs to the heat shock protein 70 family.

The sequence is that of Heat shock 70 kDa protein II (HSP70II) from Paracentrotus lividus (Common sea urchin).